A 448-amino-acid chain; its full sequence is DNA repair protein RadA (448 aa).

The C4-type zinc finger occupies 10–27; it reads CQHCGFTSPKWLGKCVQC. Residue 96-103 participates in ATP binding; the sequence is GSPGVGKS. The RadA KNRFG motif signature appears at 253–257; the sequence is KNRFG. The tract at residues 351–448 is lon-protease-like; that stretch reads DVFINVSGGI…NAVGKIVEWM (98 aa).

Belongs to the RecA family. RadA subfamily.

Functionally, DNA-dependent ATPase involved in processing of recombination intermediates, plays a role in repairing DNA breaks. Stimulates the branch migration of RecA-mediated strand transfer reactions, allowing the 3' invading strand to extend heteroduplex DNA faster. Binds ssDNA in the presence of ADP but not other nucleotides, has ATPase activity that is stimulated by ssDNA and various branched DNA structures, but inhibited by SSB. Does not have RecA's homology-searching function. This chain is DNA repair protein RadA, found in Helicobacter pylori (strain ATCC 700392 / 26695) (Campylobacter pylori).